A 402-amino-acid chain; its full sequence is Endo-polygalacturonase (402 aa).

The N-terminal stretch at 1 to 23 is a signal peptide; the sequence is MEYQSGKRVLSLSLGLIGLFSAS. Disulfide bonds link Cys-41–Cys-62 and Cys-115–Cys-125. Asp-249 acts as the Proton donor in catalysis. His-277 is a catalytic residue.

This sequence belongs to the glycosyl hydrolase 28 family. Monomer.

It localises to the secreted. It catalyses the reaction (1,4-alpha-D-galacturonosyl)n+m + H2O = (1,4-alpha-D-galacturonosyl)n + (1,4-alpha-D-galacturonosyl)m.. Involved in maceration and soft-rotting of plant tissue. This Pectobacterium parmentieri protein is Endo-polygalacturonase (pehA).